The following is a 91-amino-acid chain: UPF0512 protein E (91 aa).

Positions 1–25 are enriched in low complexity; sequence MAIFKSISSISNSTSAMGSSNSTSN. The interval 1–26 is disordered; that stretch reads MAIFKSISSISNSTSAMGSSNSTSNR.

This sequence belongs to the UPF0512 family.

The chain is UPF0512 protein E from Dictyostelium discoideum (Social amoeba).